The sequence spans 417 residues: UDP-N-acetylglucosamine 1-carboxyvinyltransferase (417 aa).

23-24 (KN) serves as a coordination point for phosphoenolpyruvate. Arg93 contributes to the UDP-N-acetyl-alpha-D-glucosamine binding site. Asp117 serves as the catalytic Proton donor. Residues Asp305 and Val327 each contribute to the UDP-N-acetyl-alpha-D-glucosamine site.

It belongs to the EPSP synthase family. MurA subfamily.

The protein resides in the cytoplasm. The catalysed reaction is phosphoenolpyruvate + UDP-N-acetyl-alpha-D-glucosamine = UDP-N-acetyl-3-O-(1-carboxyvinyl)-alpha-D-glucosamine + phosphate. The protein operates within cell wall biogenesis; peptidoglycan biosynthesis. Cell wall formation. Adds enolpyruvyl to UDP-N-acetylglucosamine. The polypeptide is UDP-N-acetylglucosamine 1-carboxyvinyltransferase (Mycolicibacterium paratuberculosis (strain ATCC BAA-968 / K-10) (Mycobacterium paratuberculosis)).